The primary structure comprises 70 residues: MSCSCGSSCGCGSNCKCGKMYPDLDEQASTTTQAVVVVGVAHENKAGQFEMASGEGCKCGANCKCDPCNC.

Belongs to the metallothionein superfamily. Type 15 family.

Its function is as follows. Metallothioneins have a high content of cysteine residues that bind various heavy metals. In Festuca rubra (Red fescue), this protein is Metallothionein-like protein 1 (MT1).